Here is a 225-residue protein sequence, read N- to C-terminus: NAD(P)H-quinone oxidoreductase subunit K, chloroplastic (225 aa).

[4Fe-4S] cluster-binding residues include Cys43, Cys44, Cys108, and Cys139.

This sequence belongs to the complex I 20 kDa subunit family. In terms of assembly, NDH is composed of at least 16 different subunits, 5 of which are encoded in the nucleus. It depends on [4Fe-4S] cluster as a cofactor.

It localises to the plastid. The protein resides in the chloroplast thylakoid membrane. The catalysed reaction is a plastoquinone + NADH + (n+1) H(+)(in) = a plastoquinol + NAD(+) + n H(+)(out). The enzyme catalyses a plastoquinone + NADPH + (n+1) H(+)(in) = a plastoquinol + NADP(+) + n H(+)(out). Functionally, NDH shuttles electrons from NAD(P)H:plastoquinone, via FMN and iron-sulfur (Fe-S) centers, to quinones in the photosynthetic chain and possibly in a chloroplast respiratory chain. The immediate electron acceptor for the enzyme in this species is believed to be plastoquinone. Couples the redox reaction to proton translocation, and thus conserves the redox energy in a proton gradient. The protein is NAD(P)H-quinone oxidoreductase subunit K, chloroplastic of Daucus carota (Wild carrot).